The following is a 380-amino-acid chain: MGFKLISLLLLFLPLLTVTILSGVEQAFASDKALLVTGRNITADGGRSSLRGKKQRRASGCNLFQGRWVFDASYPFYDSSKCPFIDGEFDCLKFGRPDKQFLKYSWQPESCTIPRFDGGAFLRKYRGKRVMFVGDSLSLNMWESLACMIHASVPNAKTTFLKRTPLSTLTFQEYGVTLYLYRTPYIVDISKERVGRVLNLGAIEGGADAWKNMDVLVFNSWHWWTHKGQSQGWDYIRDGSSLVRDMNRLDAFYKGLSTWARWVDQNVDTAKTRVFFQGISPTHYEGREWNEPRKTCSGQMQPLGGSSYPSGQPPSSGVVSKVLSSMKKPVTLLDITTLSQLRKDAHPSSYGGDGGTDCSHWCLPGLPDTWNQLLYAALTM.

Residues 7–29 traverse the membrane as a helical; Signal-anchor for type II membrane protein segment; sequence SLLLLFLPLLTVTILSGVEQAFA. Positions 134–136 match the GDS motif motif; that stretch reads GDS. A DCXHWCLPGXXDXWN motif motif is present at residues 357 to 371; it reads DCSHWCLPGLPDTWN.

This sequence belongs to the PC-esterase family. TBL subfamily.

It localises to the membrane. May act as a bridging protein that binds pectin and other cell wall polysaccharides. Probably involved in maintaining esterification of pectins. May be involved in the specific O-acetylation of cell wall polymers. The chain is Protein trichome birefringence-like 38 (TBL38) from Arabidopsis thaliana (Mouse-ear cress).